Reading from the N-terminus, the 386-residue chain is Alanine racemase (386 aa).

The active-site Proton acceptor; specific for D-alanine is Lys48. Lys48 is modified (N6-(pyridoxal phosphate)lysine). Arg149 serves as a coordination point for substrate. Residue Tyr278 is the Proton acceptor; specific for L-alanine of the active site. Met326 contacts substrate.

Belongs to the alanine racemase family. Pyridoxal 5'-phosphate serves as cofactor.

The catalysed reaction is L-alanine = D-alanine. The protein operates within amino-acid biosynthesis; D-alanine biosynthesis; D-alanine from L-alanine: step 1/1. Functionally, catalyzes the interconversion of L-alanine and D-alanine. May also act on other amino acids. This chain is Alanine racemase (alr), found in Nostoc sp. (strain PCC 7120 / SAG 25.82 / UTEX 2576).